The primary structure comprises 564 residues: Dihydroxy-acid dehydratase (564 aa).

Residue Asp78 participates in Mg(2+) binding. Residue Cys119 coordinates [2Fe-2S] cluster. Mg(2+) contacts are provided by Asp120 and Lys121. Lys121 carries the post-translational modification N6-carboxylysine. Position 192 (Cys192) interacts with [2Fe-2S] cluster. Glu451 serves as a coordination point for Mg(2+). Residue Ser477 is the Proton acceptor of the active site.

The protein belongs to the IlvD/Edd family. In terms of assembly, homodimer. It depends on [2Fe-2S] cluster as a cofactor. Mg(2+) serves as cofactor.

The enzyme catalyses (2R)-2,3-dihydroxy-3-methylbutanoate = 3-methyl-2-oxobutanoate + H2O. It carries out the reaction (2R,3R)-2,3-dihydroxy-3-methylpentanoate = (S)-3-methyl-2-oxopentanoate + H2O. It participates in amino-acid biosynthesis; L-isoleucine biosynthesis; L-isoleucine from 2-oxobutanoate: step 3/4. Its pathway is amino-acid biosynthesis; L-valine biosynthesis; L-valine from pyruvate: step 3/4. Its function is as follows. Functions in the biosynthesis of branched-chain amino acids. Catalyzes the dehydration of (2R,3R)-2,3-dihydroxy-3-methylpentanoate (2,3-dihydroxy-3-methylvalerate) into 2-oxo-3-methylpentanoate (2-oxo-3-methylvalerate) and of (2R)-2,3-dihydroxy-3-methylbutanoate (2,3-dihydroxyisovalerate) into 2-oxo-3-methylbutanoate (2-oxoisovalerate), the penultimate precursor to L-isoleucine and L-valine, respectively. This chain is Dihydroxy-acid dehydratase, found in Nitratiruptor sp. (strain SB155-2).